The chain runs to 230 residues: Uracil-DNA glycosylase (230 aa).

Residue Asp-70 is the Proton acceptor of the active site.

It belongs to the uracil-DNA glycosylase (UDG) superfamily. UNG family.

The protein resides in the cytoplasm. It carries out the reaction Hydrolyzes single-stranded DNA or mismatched double-stranded DNA and polynucleotides, releasing free uracil.. Excises uracil residues from the DNA which can arise as a result of misincorporation of dUMP residues by DNA polymerase or due to deamination of cytosine. The chain is Uracil-DNA glycosylase from Pseudomonas savastanoi pv. phaseolicola (strain 1448A / Race 6) (Pseudomonas syringae pv. phaseolicola (strain 1448A / Race 6)).